We begin with the raw amino-acid sequence, 434 residues long: Alpha-enolase (434 aa).

Ser40 contacts Mg(2+). The substrate site is built by His158 and Glu167. Catalysis depends on Glu210, which acts as the Proton donor. Mg(2+) contacts are provided by Asp245, Glu293, and Asp318. Substrate is bound by residues Glu293 and Asp318. The active-site Proton acceptor is the Lys343. Residues 370–373 (SHRS) and Lys394 contribute to the substrate site.

This sequence belongs to the enolase family. In terms of assembly, homodimer. Requires Mg(2+) as cofactor.

Its subcellular location is the cytoplasm. It catalyses the reaction (2R)-2-phosphoglycerate = phosphoenolpyruvate + H2O. The protein operates within carbohydrate degradation; glycolysis; pyruvate from D-glyceraldehyde 3-phosphate: step 4/5. The chain is Alpha-enolase from Python regius (Ball python).